The primary structure comprises 104 residues: Large ribosomal subunit protein uL24 (104 aa).

The protein belongs to the universal ribosomal protein uL24 family. As to quaternary structure, part of the 50S ribosomal subunit.

In terms of biological role, one of two assembly initiator proteins, it binds directly to the 5'-end of the 23S rRNA, where it nucleates assembly of the 50S subunit. Functionally, one of the proteins that surrounds the polypeptide exit tunnel on the outside of the subunit. This Yersinia enterocolitica serotype O:8 / biotype 1B (strain NCTC 13174 / 8081) protein is Large ribosomal subunit protein uL24.